Reading from the N-terminus, the 365-residue chain is Fatty acid hydroxylase vlmA (365 aa).

Positions 20 to 41 (TTIKRRQNDKTKTPKTKPVSKI) are disordered. Asn-47 carries N-linked (GlcNAc...) asparagine glycosylation. The next 4 helical transmembrane spans lie at 62 to 82 (ILLQSLLPITVHQLTTLVLSI), 89 to 109 (VHPFLLRLCVIIGYGYAFRFL), 144 to 164 (LNWSLPLTVGSRTVMCVLVAY), and 179 to 199 (WWAWLAVYLSLYPIILDFYYY). The 147-residue stretch at 189–335 (LYPIILDFYY…TRIWDRLFGT (147 aa)) folds into the Fatty acid hydroxylase domain.

The protein belongs to the sterol desaturase family. TMEM195 subfamily.

The protein resides in the membrane. The protein operates within secondary metabolite biosynthesis. In terms of biological role, fatty acid hydroxylase; part of the gene cluster that mediates the biosynthesis of verlamelin, a lipopeptide that exhibits antifungal activity against plant pathogenic fungi. Verlamelin is a cyclic hexadepsipeptide and is bridged by ester bonding between a 5-hydroxytetradecanoic acid moiety and a carboxyl group on the terminal Val of amide-bonded tetradecanoyl-hexapeptide D-allo-Thr-D-Ala-L-Pro-L-Gln-D-Tyr-L-Val. VlmA and vlmB are altogether regarded as essential components in the biosynthesis of 5-hydroxytetradecanoic acid. VlmA catalyzes the hydroxylation at position C5 of tetradecanoic acid produced in primary metabolism, while the precise function of vlmB still remains to be solved. To be loaded onto the waiting NRPS, 5-hydroxytetradecanoic acid is activated in the form of acyladenylate by the AMP-dependent ligase vlmC. VlmS seems to accept the fatty-acyl intermediate onto the initial module to further elongate amino acid residues by the downstream modules. In addition, in the last module at its C-terminus, vlmS contains a surplus condensation (C) domain that may be involved in cyclization, the last step to form verlamelin. The chain is Fatty acid hydroxylase vlmA from Lecanicillium sp.